Here is a 628-residue protein sequence, read N- to C-terminus: MPSDLAKKKAAKKKEAAKARQRPRKGHEENGDAVTEPQVAEEKIEEANGRETTGDGEVDLLTKELEDFEMKKAAARAVTGVLASHPNSTDVHIINLSLTFHGQELLSDTKLELNSGRRYGLIGLNGIGKSMLLSAIGKREVPIPEHIDIYHLTREMPPSEKTPLQCVMEVDTERAMLEREAERLAHEDAECEKLMELYERLEELDADKAEMRASRILHGLGFTPAMQRKKLKDFSGGWRMRVALARALFIRPFMLLLDEPTNHLDLDACVWLEEELKTFKRILVLVSHSQDFLNGVCTNIIHMHNKKLKYYTGNYDQYVKTRLELEENQMKRFHWEQDQIAHMKNYIARFGHGSAKLARQAQSKEKTLQKMMASGLTERVVSDKTLSFYFPPCGKIPPPVIMVQNVSFKYTKDGPCIYNNLEFGIDLDTRVALVGPNGAGKSTLLKLLTGELLPTDGMIRKHSHVKIGRYHQHLQEQLDLDLSPLEYMMKCYPEIKEKEEMRKIIGRYGLTGKQQVSPIRNLSDGQKCRVCLAWLAWQNPHMLFLDEPTNHLDIETIDALADAINEFEGGMMLVSHDFRLIQQVAQEIWVCEKQTITKWPGDILAYKEHLKSKLVDEEPQLTKRTHNV.

The segment at 1 to 57 is disordered; that stretch reads MPSDLAKKKAAKKKEAAKARQRPRKGHEENGDAVTEPQVAEEKIEEANGRETTGDGE. Positions 40–53 are enriched in basic and acidic residues; sequence AEEKIEEANGRETT. ABC transporter domains lie at 91-330 and 401-618; these read VHII…ENQM and IMVQ…VDEE. 123–130 contacts ATP; it reads GLNGIGKS. Thr-223 is subject to Phosphothreonine. At Lys-309 the chain carries N6-acetyllysine. 435–442 lines the ATP pocket; sequence GPNGAGKS. The residue at position 517 (Ser-517) is a Phosphoserine.

This sequence belongs to the ABC transporter superfamily. ABCF family. EF3 subfamily.

The chain is ATP-binding cassette sub-family F member 2 from Mus musculus (Mouse).